A 179-amino-acid polypeptide reads, in one-letter code: Diphosphoinositol polyphosphate phosphohydrolase 2 (179 aa).

Residues Arg9, 17–19 (KKR), and 38–40 (SSR) each bind substrate. One can recognise a Nudix hydrolase domain in the interval 17–143 (KKRAACLCFR…VHAEYLERLK (127 aa)). Mg(2+)-binding residues include Gly49 and Glu65. A Nudix box motif is present at residues 50-71 (GGVEPEEEPGGAAAREVYEEAG). Glu68 (proton acceptor) is an active-site residue. Glu69 is a Mg(2+) binding site. Substrate is bound by residues 88–90 (RKH), Arg114, and Lys132.

The protein belongs to the Nudix hydrolase family. DIPP subfamily. The cofactor is Mg(2+). Requires Mn(2+) as cofactor.

It is found in the cytoplasm. The enzyme catalyses diphospho-myo-inositol polyphosphate + H2O = myo-inositol polyphosphate + phosphate.. The catalysed reaction is 5-diphospho-1D-myo-inositol 1,2,3,4,6-pentakisphosphate + H2O = 1D-myo-inositol hexakisphosphate + phosphate + H(+). It carries out the reaction 3,5-bis(diphospho)-1D-myo-inositol 1,2,4,6-tetrakisphosphate + H2O = 3-diphospho-1D-myo-inositol 1,2,4,5,6-pentakisphosphate + phosphate + 2 H(+). It catalyses the reaction 5-diphospho-1D-myo-inositol 1,3,4,6-tetrakisphosphate + H2O = 1D-myo-inositol 1,3,4,5,6-pentakisphosphate + phosphate + H(+). The enzyme catalyses P(1),P(6)-bis(5'-adenosyl) hexaphosphate + H2O = 2 ATP + 2 H(+). The catalysed reaction is P(1),P(5)-bis(5'-adenosyl) pentaphosphate + H2O = ADP + ATP + 2 H(+). It carries out the reaction 5-phospho-alpha-D-ribose 1-diphosphate + H2O = alpha-D-ribose 1,5-bisphosphate + phosphate + H(+). Cleaves the beta-phosphate from diphosphoinositol polyphosphates such as PP-InsP5 (diphosphoinositol pentakisphosphate), PP-InsP4 (diphosphoinositol tetrakisphosphate) and [PP]2-InsP4 (bisdiphosphoinositol tetrakisphosphate), suggesting that it may play a role in signal transduction. Diadenosine polyphosphates, particularly Ap6A (P(1),P(6)-bis(5a-adenosyl) hexaphosphate) and Ap5A (P(1),P(5)-bis(5'-adenosyl) pentaphosphate) are downstream effectors of a signaling cascade that regulates cardiac KATP channels, can also be substrates, although with lower preference than the diphosphoinositol polyphosphates. Can also catalyze the hydrolysis of 5-phosphoribose 1-diphosphate, generating the glycolytic activator ribose 1,5-bisphosphate. Does not play a role in U8 snoRNA decapping activity. Binds U8 snoRNA. This is Diphosphoinositol polyphosphate phosphohydrolase 2 from Rattus norvegicus (Rat).